A 341-amino-acid chain; its full sequence is KRR1 small subunit processome component homolog (341 aa).

Residues 126-194 (DIIKIGNLVH…VRDIVLETMN (69 aa)) enclose the KH domain. Residues 230 to 244 (KNKNISKRKQPKSRK) are compositionally biased toward basic residues. The interval 230-327 (KNKNISKRKQ…RPSEASKVDV (98 aa)) is disordered. Positions 271–341 (FLNKEQKQAK…AKLLKANKQK (71 aa)) form a coiled coil. Basic and acidic residues-rich tracts occupy residues 272–303 (LNKE…RNKD) and 313–327 (EQNR…KVDV).

The protein belongs to the KRR1 family. As to quaternary structure, monomer. Component of the ribosomal small subunit (SSU) processome.

The protein localises to the nucleus. The protein resides in the nucleolus. Functionally, required for 40S ribosome biogenesis. Involved in nucleolar processing of pre-18S ribosomal RNA and ribosome assembly. Binds to RNA. Required for female germline development, cell viability during eye development and for survival of dividing cells and epithelial cells during early wing disk development. This is KRR1 small subunit processome component homolog from Drosophila grimshawi (Hawaiian fruit fly).